A 271-amino-acid polypeptide reads, in one-letter code: Putative phosphoenolpyruvate synthase regulatory protein (271 aa).

ADP is bound at residue 152–159; the sequence is GVSRSGKT.

The protein belongs to the pyruvate, phosphate/water dikinase regulatory protein family. PSRP subfamily.

The enzyme catalyses [pyruvate, water dikinase] + ADP = [pyruvate, water dikinase]-phosphate + AMP + H(+). It catalyses the reaction [pyruvate, water dikinase]-phosphate + phosphate + H(+) = [pyruvate, water dikinase] + diphosphate. Its function is as follows. Bifunctional serine/threonine kinase and phosphorylase involved in the regulation of the phosphoenolpyruvate synthase (PEPS) by catalyzing its phosphorylation/dephosphorylation. This Thiocapsa roseopersicina protein is Putative phosphoenolpyruvate synthase regulatory protein.